Reading from the N-terminus, the 369-residue chain is Phosphoribosyl pyrophosphate synthase-associated protein 2 (369 aa).

The residue at position 1 (Met1) is an N-acetylmethionine. A phosphoserine mark is found at Ser219, Ser227, and Ser233.

It belongs to the ribose-phosphate pyrophosphokinase family. In terms of assembly, binds to PRPS1 and PRPS2.

In terms of biological role, seems to play a negative regulatory role in 5-phosphoribose 1-diphosphate synthesis. The polypeptide is Phosphoribosyl pyrophosphate synthase-associated protein 2 (Prpsap2) (Mus musculus (Mouse)).